The sequence spans 282 residues: uncharacterized protein (282 aa).

One can recognise an HTH rpiR-type domain in the interval 4-80 (STLTSKLESL…VDYLSDEKQY (77 aa)). Positions 40 to 59 (VAELAQAAGVSSASVIRFTR) form a DNA-binding region, H-T-H motif. Residues 125–265 (IAQKIVEAKR…FFKYLTLTNE (141 aa)) enclose the SIS domain.

This is an uncharacterized protein from Providencia stuartii.